Here is a 367-residue protein sequence, read N- to C-terminus: Aminomethyltransferase (367 aa).

Belongs to the GcvT family. The glycine cleavage system is composed of four proteins: P, T, L and H.

It catalyses the reaction N(6)-[(R)-S(8)-aminomethyldihydrolipoyl]-L-lysyl-[protein] + (6S)-5,6,7,8-tetrahydrofolate = N(6)-[(R)-dihydrolipoyl]-L-lysyl-[protein] + (6R)-5,10-methylene-5,6,7,8-tetrahydrofolate + NH4(+). In terms of biological role, the glycine cleavage system catalyzes the degradation of glycine. This Mycobacterium avium (strain 104) protein is Aminomethyltransferase.